A 73-amino-acid polypeptide reads, in one-letter code: Large ribosomal subunit protein bL31 (73 aa).

Belongs to the bacterial ribosomal protein bL31 family. Type A subfamily. In terms of assembly, part of the 50S ribosomal subunit.

Binds the 23S rRNA. This is Large ribosomal subunit protein bL31 from Rhizobium etli (strain CIAT 652).